The primary structure comprises 81 residues: MSHTVKIYDTCIGCTQCVRACPTDVLEMVPWDGCKSGQIASSPRVEDCVGCKRCETACPTDFLSVRVYLGAETTRSLGLAY.

4Fe-4S ferredoxin-type domains are found at residues 2-31 (SHTVKIYDTCIGCTQCVRACPTDVLEMVPW) and 37-68 (GQIASSPRVEDCVGCKRCETACPTDFLSVRVY). Cys-11, Cys-14, Cys-17, Cys-21, Cys-48, Cys-51, Cys-54, and Cys-58 together coordinate [4Fe-4S] cluster.

As to quaternary structure, the eukaryotic PSI reaction center is composed of at least 11 subunits. [4Fe-4S] cluster serves as cofactor.

The protein resides in the plastid. The protein localises to the chloroplast thylakoid membrane. It carries out the reaction reduced [plastocyanin] + hnu + oxidized [2Fe-2S]-[ferredoxin] = oxidized [plastocyanin] + reduced [2Fe-2S]-[ferredoxin]. Its function is as follows. Apoprotein for the two 4Fe-4S centers FA and FB of photosystem I (PSI); essential for photochemical activity. FB is the terminal electron acceptor of PSI, donating electrons to ferredoxin. The C-terminus interacts with PsaA/B/D and helps assemble the protein into the PSI complex. Required for binding of PsaD and PsaE to PSI. PSI is a plastocyanin/cytochrome c6-ferredoxin oxidoreductase, converting photonic excitation into a charge separation, which transfers an electron from the donor P700 chlorophyll pair to the spectroscopically characterized acceptors A0, A1, FX, FA and FB in turn. The sequence is that of Photosystem I iron-sulfur center from Thalassiosira pseudonana (Marine diatom).